The chain runs to 263 residues: MAPK-interacting and spindle-stabilizing protein (263 aa).

The interval 13 to 238 (GSPAPFLPSG…LGKQQGHNTT (226 aa)) is disordered. Composition is skewed to pro residues over residues 14-34 (SPAP…PYPG) and 140-155 (GLQP…PPGP). The segment covering 156-165 (SAASPGPGSL) has biased composition (low complexity). Residues 176–189 (PSDSSNPESTLEST) show a composition bias toward polar residues. Basic residues predominate over residues 202–213 (IKRRRSKKKSKR).

It belongs to the MISS family. In terms of assembly, interacts with MAPK1. Post-translationally, phosphorylated in vitro by MAPK1.

The protein localises to the cytoplasm. The protein resides in the cytoskeleton. Its subcellular location is the spindle. Involved in the maintenance of the spindle integrity during the cytostatic factor (CSF) arrest of oocytes. This is MAPK-interacting and spindle-stabilizing protein (Mapk1ip1) from Mus musculus (Mouse).